A 397-amino-acid chain; its full sequence is Enoyl-[acyl-carrier-protein] reductase [NADH] (397 aa).

NAD(+) is bound by residues 48 to 53, 74 to 75, 111 to 112, and 139 to 140; these read GASTGY, FE, DA, and LA. Y224 lines the substrate pocket. Catalysis depends on Y234, which acts as the Proton donor. NAD(+) is bound by residues K243 and 272-274; that span reads VVT.

It belongs to the TER reductase family. In terms of assembly, monomer.

The enzyme catalyses a 2,3-saturated acyl-[ACP] + NAD(+) = a (2E)-enoyl-[ACP] + NADH + H(+). Its pathway is lipid metabolism; fatty acid biosynthesis. Involved in the final reduction of the elongation cycle of fatty acid synthesis (FAS II). Catalyzes the reduction of a carbon-carbon double bond in an enoyl moiety that is covalently linked to an acyl carrier protein (ACP). The protein is Enoyl-[acyl-carrier-protein] reductase [NADH] of Pseudomonas fluorescens (strain SBW25).